The primary structure comprises 324 residues: Phospho-N-acetylmuramoyl-pentapeptide-transferase (324 aa).

Helical transmembrane passes span isoleucine 5–isoleucine 25, proline 52–alanine 72, valine 76–phenylalanine 96, phenylalanine 117–serine 137, tryptophan 147–serine 167, leucine 176–tryptophan 196, valine 203–histidine 223, valine 227–leucine 247, leucine 250–isoleucine 270, and isoleucine 302–valine 322.

Belongs to the glycosyltransferase 4 family. MraY subfamily. It depends on Mg(2+) as a cofactor.

It localises to the cell membrane. The enzyme catalyses UDP-N-acetyl-alpha-D-muramoyl-L-alanyl-gamma-D-glutamyl-meso-2,6-diaminopimeloyl-D-alanyl-D-alanine + di-trans,octa-cis-undecaprenyl phosphate = di-trans,octa-cis-undecaprenyl diphospho-N-acetyl-alpha-D-muramoyl-L-alanyl-D-glutamyl-meso-2,6-diaminopimeloyl-D-alanyl-D-alanine + UMP. The protein operates within cell wall biogenesis; peptidoglycan biosynthesis. Its function is as follows. Catalyzes the initial step of the lipid cycle reactions in the biosynthesis of the cell wall peptidoglycan: transfers peptidoglycan precursor phospho-MurNAc-pentapeptide from UDP-MurNAc-pentapeptide onto the lipid carrier undecaprenyl phosphate, yielding undecaprenyl-pyrophosphoryl-MurNAc-pentapeptide, known as lipid I. This chain is Phospho-N-acetylmuramoyl-pentapeptide-transferase, found in Geobacillus thermodenitrificans (strain NG80-2).